The primary structure comprises 129 residues: Large-conductance mechanosensitive channel (129 aa).

3 consecutive transmembrane segments (helical) span residues Ile14–Leu34, Ile38–Tyr58, and Leu67–Ala87.

It belongs to the MscL family. As to quaternary structure, homopentamer.

The protein resides in the cell membrane. Functionally, channel that opens in response to stretch forces in the membrane lipid bilayer. May participate in the regulation of osmotic pressure changes within the cell. The protein is Large-conductance mechanosensitive channel of Lysinibacillus sphaericus (strain C3-41).